The primary structure comprises 272 residues: HMP-PP phosphatase (272 aa).

The active-site Nucleophile is Asp8. 3 residues coordinate Mg(2+): Asp8, Asp10, and Asp212.

Belongs to the HAD-like hydrolase superfamily. Cof family. Mg(2+) is required as a cofactor.

The catalysed reaction is 4-amino-2-methyl-5-(diphosphooxymethyl)pyrimidine + H2O = 4-amino-2-methyl-5-(phosphooxymethyl)pyrimidine + phosphate + H(+). Functionally, catalyzes the hydrolysis of 4-amino-2-methyl-5-hydroxymethylpyrimidine pyrophosphate (HMP-PP) to 4-amino-2-methyl-5-hydroxymethylpyrimidine phosphate (HMP-P). This is HMP-PP phosphatase from Escherichia fergusonii (strain ATCC 35469 / DSM 13698 / CCUG 18766 / IAM 14443 / JCM 21226 / LMG 7866 / NBRC 102419 / NCTC 12128 / CDC 0568-73).